A 242-amino-acid chain; its full sequence is Small ribosomal subunit protein uS2 (242 aa).

Belongs to the universal ribosomal protein uS2 family.

In Shewanella loihica (strain ATCC BAA-1088 / PV-4), this protein is Small ribosomal subunit protein uS2.